We begin with the raw amino-acid sequence, 413 residues long: Sporulation-specific protein 74 (413 aa).

The segment at 1-87 (MGAGTLLNGL…SEHTDDFNDG (87 aa)) is disordered. The span at 69–83 (HENKDIHERSEHTDD) shows a compositional bias: basic and acidic residues.

In terms of assembly, interacts with itself. Interacts with MPC54, NUD1 and SPO21/MPC70.

It is found in the cytoplasm. It localises to the cytoskeleton. Its subcellular location is the microtubule organizing center. The protein resides in the spindle pole body. In terms of biological role, involved in the pathway that organizes the shaping and sizing of the prospore membrane (PSM) during sporulation. Probable component of a core structural unit of the scaffold that initiates synthesis of the prospore membrane. This is Sporulation-specific protein 74 (SPO74) from Saccharomyces cerevisiae (strain ATCC 204508 / S288c) (Baker's yeast).